Here is a 439-residue protein sequence, read N- to C-terminus: Niacin transporter NiaP (439 aa).

Transmembrane regions (helical) follow at residues 20 to 40, 57 to 77, 84 to 104, 108 to 128, 143 to 163, 169 to 189, 253 to 273, 288 to 308, 316 to 336, 338 to 358, 374 to 394, and 407 to 427; these read LWVV…IAFI, WIVS…GGLA, TVFA…AFAP, WLLA…PVAV, FIVL…LVSY, FGWH…YVII, LMLW…FTWL, FEYV…AAWL, ATLA…GQAD, VFNI…AWGV, FGAG…PIVV, and VFMM…ILGE.

Belongs to the major facilitator superfamily. Sugar transporter (TC 2.A.1.1) family.

The protein resides in the cell inner membrane. Its function is as follows. Functions as a high-affinity transporter of niacin (nicotinamide or nicotinate). Probably substantially contributes to niacin transport when its concentration in the medium is very low. This is Niacin transporter NiaP from Acinetobacter baylyi (strain ATCC 33305 / BD413 / ADP1).